The sequence spans 608 residues: Mitogen-activated protein kinase kinase kinase 1 (608 aa).

A compositionally biased stretch (basic residues) spans 1–13 (MDRILARMKKSTG). The segment at 1-20 (MDRILARMKKSTGRRGGDKN) is disordered. The interval 1-325 (MDRILARMKK…VSNTSPIYPD (325 aa)) is regulatory region. Residue Ser62 is modified to Phosphoserine. The segment at 192–234 (MERTPTIVKSKGYLVPNNVVAVGVGVGGGIKGLRPPVLKPPPA) is binding with MPK4. Disordered stretches follow at residues 228 to 247 (VLKP…GSSW) and 256 to 287 (SETV…EAEE). Positions 271-287 (DGCDEEEGKEEEAEAEE) are enriched in acidic residues. One can recognise a Protein kinase domain in the interval 333 to 587 (WQKGQLLGRG…AAELLNHPFV (255 aa)). ATP-binding positions include 339–347 (LGRGSFGSV) and Lys361. Asp456 functions as the Proton acceptor in the catalytic mechanism. A Phosphoserine modification is found at Ser603.

Belongs to the protein kinase superfamily. STE Ser/Thr protein kinase family. MAP kinase kinase kinase subfamily. As to quaternary structure, interacts with MKK1, MMK2 and MPK4. May form a ternary complex composed of MEKK1 and MKK1/MKK2 and MPK4. Interacts with RACK1A, RACK1B and RACK1C. Binds to CRLK1. Phosphorylated by CRLK1 in response to cold.

It localises to the cell membrane. It is found in the endosome. It catalyses the reaction L-seryl-[protein] + ATP = O-phospho-L-seryl-[protein] + ADP + H(+). The catalysed reaction is L-threonyl-[protein] + ATP = O-phospho-L-threonyl-[protein] + ADP + H(+). Activated by cold via CRLK1-mediated phosphorylation and leading to elevated kinase activity towards MKK2. Functionally, the MEKK1, MKK1/MKK2 and MPK4 function in a signaling pathway that modulates the expression of genes responding to biotic and abiotic stresses and also plays an important role in pathogen defense by negatively regulating innate immunity. Involved in the innate immune MAP kinase signaling cascade (MEKK1, MKK4/MKK5 and MPK3/MPK6) downstream of bacterial flagellin receptor FLS2. May be involved in the cold and salinity stress-mediated MAP kinase signaling cascade (MEKK1, MKK1/MKK2 and MPK4/MPK6). Activates by phosphorylation the downstream MKK2, MKK4 and MKK5 in a calcium-dependent manner. The polypeptide is Mitogen-activated protein kinase kinase kinase 1 (MEKK1) (Arabidopsis thaliana (Mouse-ear cress)).